Consider the following 247-residue polypeptide: AA9 family lytic polysaccharide monooxygenase A (247 aa).

The signal sequence occupies residues 1–19; that stretch reads MVRLASLAVLGSVIATASA. The Cu(2+) site is built by H20 and H100. Residues C60 and C185 are joined by a disulfide bond. Residue H165 participates in O2 binding. Y182 lines the Cu(2+) pocket. Residue N193 is glycosylated (N-linked (GlcNAc...) asparagine).

This sequence belongs to the polysaccharide monooxygenase AA9 family. Cu(2+) serves as cofactor.

The protein resides in the secreted. The catalysed reaction is [(1-&gt;4)-beta-D-glucosyl]n+m + reduced acceptor + O2 = 4-dehydro-beta-D-glucosyl-[(1-&gt;4)-beta-D-glucosyl]n-1 + [(1-&gt;4)-beta-D-glucosyl]m + acceptor + H2O.. Lytic polysaccharide monooxygenase (LPMO) that depolymerizes polysaccharides via the oxidation of scissile alpha- or beta-(1-4)-glycosidic bonds, yielding C4 oxidation products. Catalysis by LPMOs requires the reduction of the active-site copper from Cu(II) to Cu(I) by a reducing agent and H(2)O(2) or O(2) as a cosubstrate. Shows C4-oxidative cleavage of amorphous cellulose and soluble cello-oligosaccharides. Also active on xyloglucan, mixed-linkage beta-glucan, and glucomannan. Not active on crystalline forms of cellulose. Has higher affinity for linear substrates compared to branched substrates. Catalyzes a fast and specific peroxygenase reaction that is at least two orders of magnitude faster than the apparent monooxygenase reaction. This chain is AA9 family lytic polysaccharide monooxygenase A, found in Schizophyllum commune (strain H4-8 / FGSC 9210) (Split gill fungus).